We begin with the raw amino-acid sequence, 462 residues long: Trigger factor (462 aa).

The region spanning 161 to 246 (GDVVVIDFVG…VKEVRAPKAA (86 aa)) is the PPIase FKBP-type domain. Residues 428 to 437 (SVEDLRKDPD) show a composition bias toward basic and acidic residues. A disordered region spans residues 428–462 (SVEDLRKDPDEASADGEAAPAKPKKKAAAKKKAAE). Residues 449–462 (KPKKKAAAKKKAAE) show a composition bias toward basic residues.

Belongs to the FKBP-type PPIase family. Tig subfamily.

It is found in the cytoplasm. It carries out the reaction [protein]-peptidylproline (omega=180) = [protein]-peptidylproline (omega=0). Involved in protein export. Acts as a chaperone by maintaining the newly synthesized protein in an open conformation. Functions as a peptidyl-prolyl cis-trans isomerase. The sequence is that of Trigger factor from Paramagnetospirillum magneticum (strain ATCC 700264 / AMB-1) (Magnetospirillum magneticum).